The following is a 105-amino-acid chain: Phosphoribosyl-AMP cyclohydrolase (105 aa).

Residue D72 participates in Mg(2+) binding. C73 contacts Zn(2+). Mg(2+) is bound by residues D74 and D76. C89 and C96 together coordinate Zn(2+).

This sequence belongs to the PRA-CH family. As to quaternary structure, homodimer. It depends on Mg(2+) as a cofactor. Zn(2+) serves as cofactor.

Its subcellular location is the cytoplasm. It catalyses the reaction 1-(5-phospho-beta-D-ribosyl)-5'-AMP + H2O = 1-(5-phospho-beta-D-ribosyl)-5-[(5-phospho-beta-D-ribosylamino)methylideneamino]imidazole-4-carboxamide. It participates in amino-acid biosynthesis; L-histidine biosynthesis; L-histidine from 5-phospho-alpha-D-ribose 1-diphosphate: step 3/9. Its function is as follows. Catalyzes the hydrolysis of the adenine ring of phosphoribosyl-AMP. The protein is Phosphoribosyl-AMP cyclohydrolase of Listeria innocua serovar 6a (strain ATCC BAA-680 / CLIP 11262).